The sequence spans 142 residues: Galectin-10 (142 aa).

Residue serine 2 is modified to N-acetylserine. The 133-residue stretch at 6 to 138 folds into the Galectin domain; sequence VPYTEAASLS…DISLTKFNVS (133 aa).

As to quaternary structure, interacts with CEL. As to expression, expressed abundantly in the bone marrow. Expressed exclusively by eosinophils and basophils. Not detected in monocytes and neutrophils. Expressed in CD25-positive regulatory T-cells (Treg) (at protein level). Found in intestinal tissue from patients with Celiac disease, expression is directly related to the histological grade of mucosal damage and to the number of eosinophils found in the duodenal lesion (at protein level). Found in sputum of patients with eosinophilic inflammatory diseases such as asthma (at protein level).

It is found in the cytoplasm. It localises to the cytosol. The protein localises to the cytoplasmic granule. Regulates immune responses through the recognition of cell-surface glycans. Essential for the anergy and suppressive function of CD25-positive regulatory T-cells (Treg). This Homo sapiens (Human) protein is Galectin-10 (CLC).